The chain runs to 260 residues: MAVVTMKQLLESGTNFGHSTRKWNPKMKKYIFTSRNGIHIIDIKKTSEKIEEAYQELSKIVNQGGKVLFLGTKKQIQTSIMEESKRCGQYYVNHRWLGGILTNFHTILKRIQLLHDLHKQEEDGVWKKLPKKEVVQLKRKRDKLEKFLGGIKDMKELPQALFVVDLEKEKNAVAEARKLNIKVFSMVDTNCDPDLVDYIIPANDDAIRSVKLITWIIANACIEGSGGVAEKPEQFDAKNVLKPKLPYQPNRRPYQETVKK.

Residues 240–260 (VLKPKLPYQPNRRPYQETVKK) form a disordered region.

The protein belongs to the universal ribosomal protein uS2 family.

The sequence is that of Small ribosomal subunit protein uS2 from Phytoplasma australiense.